Consider the following 473-residue polypeptide: Glycine receptor subunit beta-type 4 (473 aa).

A signal peptide spans 1-19; it reads MHSLFLKILIYSLMQCVLG. The Extracellular portion of the chain corresponds to 20–249; it reads QAEFWDYDEN…EFHVDREITH (230 aa). Residues Asn29, Asn105, and Asn151 are each glycosylated (N-linked (GlcNAc...) asparagine). Cys166 and Cys180 are joined by a disulfide. The helical transmembrane segment at 250–271 threads the bilayer; sequence HIIQSYIPTSLIVIISWFSFWL. At 272–276 the chain is on the cytoplasmic side; it reads DVEAV. Residues 277–297 traverse the membrane as a helical segment; that stretch reads PGRVSLSITTLLTLATQSSAA. Over 298–308 the chain is Extracellular; it reads RMALPQASDVK. The chain crosses the membrane as a helical span at residues 309–329; it reads AIDVWMGTCMAFVFSAMIEFT. The Cytoplasmic segment spans residues 330–439; that stretch reads VVNYCVRRKV…NRKNAQKIDR (110 aa). A helical transmembrane segment spans residues 440–460; it reads YSRALFPLAFIIFNIFYWIYY. Residues 461–473 lie on the Extracellular side of the membrane; sequence LKYAGSNSPELLL.

It belongs to the ligand-gated ion channel (TC 1.A.9) family. Glycine receptor (TC 1.A.9.3) subfamily. As to quaternary structure, pentamer.

It is found in the postsynaptic cell membrane. The protein localises to the synapse. It localises to the cell membrane. Its function is as follows. Glycine receptors are ligand-gated chloride channels. Channel opening is triggered by extracellular glycine. Contributes to the generation of inhibitory postsynaptic currents. The protein is Glycine receptor subunit beta-type 4 of Caenorhabditis elegans.